The following is a 327-amino-acid chain: Gibberellin 2-beta-dioxygenase 3 (327 aa).

A Fe2OG dioxygenase domain is found at 173-278; sequence GSDQVFRVNH…RVSFIYFGGP (106 aa). Tyrosine 183 contacts 2-oxoglutarate. The Fe cation site is built by histidine 202, aspartate 204, and histidine 259. The 2-oxoglutarate site is built by arginine 269 and serine 271.

This sequence belongs to the iron/ascorbate-dependent oxidoreductase family. GA2OX subfamily. L-ascorbate is required as a cofactor. Fe(2+) serves as cofactor. In terms of tissue distribution, expressed in roots, shoot apex, leaf blades, leaf sheaths, stems and flowers.

The catalysed reaction is gibberellin A1 + 2-oxoglutarate + O2 = gibberellin A8 + succinate + CO2. Catalyzes the 2-beta-hydroxylation of several biologically active gibberellins, leading to the homeostatic regulation of their endogenous level. Catabolism of gibberellins (GAs) plays a central role in plant development. In vitro, converts GA1, GA20, and GA29 to the corresponding 2-beta-hydroxylated products GA8, GA29-catabolite, respectively. In Oryza sativa subsp. japonica (Rice), this protein is Gibberellin 2-beta-dioxygenase 3.